The sequence spans 183 residues: Ribulose bisphosphate carboxylase small subunit, chloroplastic 3 (183 aa).

Residues 1-43 constitute a chloroplast transit peptide; sequence MATTMLNRSVIVNKEVAKTPNFPRATKNNKGFASNAAVQKCRD.

Belongs to the RuBisCO small chain family. In terms of assembly, heterohexadecamer of 8 large and 8 small subunits.

The protein localises to the plastid. It is found in the chloroplast. In terms of biological role, ruBisCO catalyzes two reactions: the carboxylation of D-ribulose 1,5-bisphosphate, the primary event in carbon dioxide fixation, as well as the oxidative fragmentation of the pentose substrate. Both reactions occur simultaneously and in competition at the same active site. Although the small subunit is not catalytic it is essential for maximal activity. The polypeptide is Ribulose bisphosphate carboxylase small subunit, chloroplastic 3 (Acetabularia peniculus (Green alga)).